The chain runs to 430 residues: T-kininogen 1 (430 aa).

The first 18 residues, 1–18 (MKLITILLLCSRLLPSLA), serve as a signal peptide directing secretion. Gln-19 carries the post-translational modification Pyrrolidone carboxylic acid. One can recognise a Cystatin kininogen-type 1 domain in the interval 28–131 (CNDETVFQAV…TQICNITPGK (104 aa)). Disulfide bonds link Cys-28–Cys-404, Cys-83–Cys-94, Cys-107–Cys-125, Cys-141–Cys-144, Cys-205–Cys-217, Cys-228–Cys-247, Cys-263–Cys-266, Cys-327–Cys-339, and Cys-350–Cys-369. N-linked (GlcNAc...) asparagine glycosylation is present at Asn-82. A Cystatin kininogen-type 2 domain is found at 150-253 (MDSSDLKPVL…SQSCDLYPGD (104 aa)). Asn-168 and Asn-204 each carry an N-linked (GlcNAc...) asparagine glycan. Residues 272-375 (VDSPELKEAL…TVRCQALDMM (104 aa)) form the Cystatin kininogen-type 3 domain. An N-linked (GlcNAc...) asparagine glycan is attached at Asn-326. The interval 411 to 430 (SKARAGPAPDHQAEASTVTP) is disordered.

As T-kinin is preceded by a Met instead of an Arg or Lys, it is not released from its precursor by either tissue or plasma kallikrein. As to expression, plasma.

Its subcellular location is the secreted. It localises to the extracellular space. In terms of biological role, kininogens are plasma glycoproteins with a number of functions: (1) as precursor of the active peptide bradykinin they effect smooth muscle contraction, induction of hypotension and increase of vascular permeability. (2) They play a role in blood coagulation by helping to position optimally prekallikrein and factor XI next to factor XII. (3) They are inhibitor of thiol proteases. This Rattus norvegicus (Rat) protein is T-kininogen 1 (Map1).